A 184-amino-acid polypeptide reads, in one-letter code: Ribosome maturation factor RimM (184 aa).

Residues 101–180 (DGEFFYCDLV…KITTNNAKTL (80 aa)) form the PRC barrel domain.

It belongs to the RimM family. Binds ribosomal protein uS19.

Its subcellular location is the cytoplasm. In terms of biological role, an accessory protein needed during the final step in the assembly of 30S ribosomal subunit, possibly for assembly of the head region. Essential for efficient processing of 16S rRNA. May be needed both before and after RbfA during the maturation of 16S rRNA. It has affinity for free ribosomal 30S subunits but not for 70S ribosomes. The chain is Ribosome maturation factor RimM from Helicobacter pylori (strain Shi470).